The following is a 247-amino-acid chain: MSHRDTLFSAPIARLGDWTFDERVAEVFPDMIQRSVPGYSNIISMIGMLAERFVQPNTQVYDLGCSLGAATLSVRRNIRHEHCRIIAVDNSPAMIERCRRHIDAYKAPTPVEVVEGDIRDITIENASMVVLNFTLQFLEPAERQALLDKIYLGLNPGGALVLSEKFSFEDAKVGELLFNMHHDFKRANGYSELEISQKRSMLENVMLTDSVETHKARLRKAGFEHSELWFQCFNFGSLVALKAGVAA.

Residues Tyr39, Gly64–Ser66, Asp89–Asn90, Asp117–Ile118, Asn132, and Arg199 contribute to the S-adenosyl-L-methionine site.

This sequence belongs to the class I-like SAM-binding methyltransferase superfamily. Cx-SAM synthase family. In terms of assembly, homodimer.

The catalysed reaction is prephenate + S-adenosyl-L-methionine = carboxy-S-adenosyl-L-methionine + 3-phenylpyruvate + H2O. Catalyzes the conversion of S-adenosyl-L-methionine (SAM) to carboxy-S-adenosyl-L-methionine (Cx-SAM). This is Carboxy-S-adenosyl-L-methionine synthase from Salmonella enteritidis PT4 (strain P125109).